The primary structure comprises 107 residues: MVKFAHVVAFLLLASLIQPLTARDLEINVLQLDVSQSGCPGVTKERWPELLGTPAKFAMQIIQKENPKLTNVQTILNGGPVTEDLRCNRVRLFVNVLDFIVQTPQIG.

Residues 1–22 form the signal peptide; it reads MVKFAHVVAFLLLASLIQPLTA. A propeptide spanning residues 23 to 36 is cleaved from the precursor; it reads RDLEINVLQLDVSQ.

This sequence belongs to the protease inhibitor I13 (potato type I serine protease inhibitor) family.

The protein localises to the secreted. This chain is Proteinase inhibitor I-A (TIMPB), found in Nicotiana tabacum (Common tobacco).